Here is a 258-residue protein sequence, read N- to C-terminus: GTP cyclohydrolase FolE2 (258 aa).

The protein belongs to the GTP cyclohydrolase IV family.

The catalysed reaction is GTP + H2O = 7,8-dihydroneopterin 3'-triphosphate + formate + H(+). Its pathway is cofactor biosynthesis; 7,8-dihydroneopterin triphosphate biosynthesis; 7,8-dihydroneopterin triphosphate from GTP: step 1/1. Converts GTP to 7,8-dihydroneopterin triphosphate. The sequence is that of GTP cyclohydrolase FolE2 from Lawsonia intracellularis (strain PHE/MN1-00).